A 90-amino-acid polypeptide reads, in one-letter code: Acylphosphatase (90 aa).

The Acylphosphatase-like domain occupies 3–90 (QYRIIVDGRV…DGFQKFNISY (88 aa)). Catalysis depends on residues Arg-18 and Asn-36.

The protein belongs to the acylphosphatase family.

The enzyme catalyses an acyl phosphate + H2O = a carboxylate + phosphate + H(+). This Bacillus licheniformis (strain ATCC 14580 / DSM 13 / JCM 2505 / CCUG 7422 / NBRC 12200 / NCIMB 9375 / NCTC 10341 / NRRL NRS-1264 / Gibson 46) protein is Acylphosphatase (acyP).